The sequence spans 295 residues: ATP synthase gamma chain (295 aa).

This sequence belongs to the ATPase gamma chain family. As to quaternary structure, F-type ATPases have 2 components, CF(1) - the catalytic core - and CF(0) - the membrane proton channel. CF(1) has five subunits: alpha(3), beta(3), gamma(1), delta(1), epsilon(1). CF(0) has three main subunits: a, b and c.

It localises to the cell inner membrane. In terms of biological role, produces ATP from ADP in the presence of a proton gradient across the membrane. The gamma chain is believed to be important in regulating ATPase activity and the flow of protons through the CF(0) complex. This chain is ATP synthase gamma chain, found in Bdellovibrio bacteriovorus (strain ATCC 15356 / DSM 50701 / NCIMB 9529 / HD100).